The following is a 630-amino-acid chain: tRNA uridine 5-carboxymethylaminomethyl modification enzyme MnmG (630 aa).

An FAD-binding site is contributed by 13 to 18; it reads GGGHAG. NAD(+) is bound at residue 273-287; it reads GPRYCPSIEDKVMRF.

It belongs to the MnmG family. As to quaternary structure, homodimer. Heterotetramer of two MnmE and two MnmG subunits. Requires FAD as cofactor.

It localises to the cytoplasm. NAD-binding protein involved in the addition of a carboxymethylaminomethyl (cmnm) group at the wobble position (U34) of certain tRNAs, forming tRNA-cmnm(5)s(2)U34. The polypeptide is tRNA uridine 5-carboxymethylaminomethyl modification enzyme MnmG (Actinobacillus pleuropneumoniae serotype 7 (strain AP76)).